A 233-amino-acid polypeptide reads, in one-letter code: Sugar fermentation stimulation protein homolog (233 aa).

It belongs to the SfsA family.

The protein is Sugar fermentation stimulation protein homolog of Chelativorans sp. (strain BNC1).